The primary structure comprises 3414 residues: Genome polyprotein (3414 aa).

Residues 1-27 (MAGKAVLKGKGGGPPRRASKVAPKKTR) form a disordered region. The Cytoplasmic segment spans residues 1–98 (MAGKAVLKGK…LHRRGSRRTT (98 aa)). Positions 17–27 (RASKVAPKKTR) are enriched in basic residues. Residues 97–117 (TTIDWMTPLLITVMLGMCLTA) constitute a propeptide, ER anchor for the capsid protein C, removed in mature form by serine protease NS3. Residues 99–117 (IDWMTPLLITVMLGMCLTA) form a helical membrane-spanning segment. Residues 118–242 (TVRRERDGSM…HLTRVEGWVW (125 aa)) lie on the Extracellular side of the membrane. Residue Asn-144 is glycosylated (N-linked (GlcNAc...) asparagine; by host). Residues 243 to 260 (KNKLFTLSLVMVAWLMVD) form a helical membrane-spanning segment. A topological domain (cytoplasmic) is located at residue Gly-261. Residues 262 to 280 (LLPRILIVVVALALVPAYA) form a helical membrane-spanning segment. At 281–727 (SRCTHLENRD…HTVLGGAFNT (447 aa)) the chain is on the extracellular side. 6 cysteine pairs are disulfide-bonded: Cys-283/Cys-310, Cys-340/Cys-396, Cys-340/Cys-401, Cys-354/Cys-385, Cys-372/Cys-396, and Cys-372/Cys-401. Positions 378–391 (DRGWGNHCGLFGKG) are fusion peptide. Asn-434 carries N-linked (GlcNAc...) asparagine; by host glycosylation. 2 cysteine pairs are disulfide-bonded: Cys-466–Cys-570 and Cys-587–Cys-618. Residues 728 to 748 (LLGGVGFLPKILLGVAMAWLG) form a helical membrane-spanning segment. Residues 749-755 (LNMRNPT) lie on the Cytoplasmic side of the membrane. Residues 756–776 (LSMGFLLSGGLVLAMTLGVGA) traverse the membrane as a helical segment. At 777-1187 (DVGCAVDTER…LVSVESLFRY (411 aa)) the chain is on the extracellular side. 6 disulfide bridges follow: Cys-780–Cys-791, Cys-831–Cys-920, Cys-955–Cys-1000, Cys-1057–Cys-1106, Cys-1068–Cys-1090, and Cys-1089–Cys-1093. 3 N-linked (GlcNAc...) asparagine; by host glycosylation sites follow: Asn-861, Asn-983, and Asn-999. The chain crosses the membrane as a helical span at residues 1188–1208 (LVAVGLVFQLELGPEAVAMVL). Residues 1209–1232 (LQAVFEMRTCLLSGFVLRRSITTR) are Cytoplasmic-facing. A helical membrane pass occupies residues 1233 to 1253 (EIVTVYFLLLVLEMGIPVKGL). Residues 1254–1267 (EHLWRWTDALAMGA) lie on the Lumenal side of the membrane. A helical transmembrane segment spans residues 1268–1288 (IIFRACTAEGKTGIGLLLAAF). Residues 1289 to 1300 (MTQSDMNIIHDG) are Cytoplasmic-facing. Residues 1301-1319 (LTAFLCVATTMAIWRYIRG) form a helical membrane-spanning segment. The Lumenal portion of the chain corresponds to 1320–1325 (QGERKG). A helical membrane pass occupies residues 1326-1346 (LTWIVPLAGILGGEGSGVRLL). Residues 1347 to 1359 (AFWELAASRGRRS) lie on the Cytoplasmic side of the membrane. A helical membrane pass occupies residues 1360–1378 (FNEPMTVIGVMLTLASGMM). Topologically, residues 1379 to 1382 (RHTS) are lumenal. Residues 1383-1403 (QEAVCAMALAAFLLLMLTLGT) traverse the membrane as a helical segment. The Cytoplasmic portion of the chain corresponds to 1404 to 1454 (RKMQLLAEWSGNIEWNPELTSEGGEVSLRVRQDALGNLHLTELEKEERMMA). Residues 1410-1449 (AEWSGNIEWNPELTSEGGEVSLRVRQDALGNLHLTELEKE) are interacts with and activates NS3 protease. Positions 1455 to 1475 (FWLVVGLIASAFHWSGILIVM) form an intramembrane region, helical. The Cytoplasmic portion of the chain corresponds to 1476–2160 (GLWTISEMLG…RIGERDAPEA (685 aa)). Residues 1490–1669 (TDLVFSGCSE…EVEKSRPNLP (180 aa)) enclose the Peptidase S7 domain. Active-site charge relay system; for serine protease NS3 activity residues include His-1543, Asp-1567, and Ser-1627. Residues 1675–1831 (TGWTAKGQIT…ESNGAIASEE (157 aa)) form the Helicase ATP-binding domain. Position 1688–1695 (1688–1695 (MHPGSGKT)) interacts with ATP. The DEAH box motif lies at 1779–1782 (DEAH). The 160-residue stretch at 1841–2000 (DGFDWITEYE…TARGPVATFY (160 aa)) folds into the Helicase C-terminal domain. Lys-1883 bears the N6-acetyllysine; by host mark. Residues 2161–2181 (FLTAVEMLVLGLATLGVVWCF) traverse the membrane as a helical segment. Residues 2182–2189 (VVRTSVSR) are Lumenal-facing. The helical intramembrane region spans 2190–2209 (MVLGTLVLATSLIFLWAGGV). Residue Gly-2210 is a topological domain, lumenal. The chain crosses the membrane as a helical span at residues 2211–2231 (YGNMAGVALVFYTLLTVLQPE). Residues 2232–2238 (TGKQRSS) lie on the Cytoplasmic side of the membrane. The helical transmembrane segment at 2239–2259 (DDNKLAYFLLTLCGLAGMVAA) threads the bilayer. The Lumenal segment spans residues 2260 to 2296 (NEMGLLEKTKADLAALFARDQGETVRWGEWTNLDIQP). Residues 2297 to 2315 (ARSWGTYVLVVSLFTPYML) constitute an intramembrane region (helical). At 2316 to 2343 (HQLQTRIQQLVNSAVASGAQAMRDLGGG) the chain is on the lumenal side. An intramembrane region (helical) is located at residues 2344-2364 (TPFFGVAGHVLALGVASLVGA). At 2365–2368 (TPTS) the chain is on the lumenal side. A helical membrane pass occupies residues 2369–2389 (LILGVGLAAFHLAIVVSGLEA). Residues 2390-2432 (ELTQRAHKVFFSAMVRNPMVDGDVINPFGDGEAKPALYERKLS) lie on the Cytoplasmic side of the membrane. A helical transmembrane segment spans residues 2433–2453 (LILALVLCLASVVMNRTFVAV). At 2454-2477 (TEAGAVGVAAAMQLLRPEMDVLWT) the chain is on the lumenal side. A helical membrane pass occupies residues 2478 to 2498 (MPVACGMSGVVRGSLWGLLPL). Residues 2499-3414 (GHRLWLRTTG…WELKLESSIF (916 aa)) lie on the Cytoplasmic side of the membrane. The 265-residue stretch at 2512-2776 (GGSEGDTLGD…EIDLGVGTRS (265 aa)) folds into the mRNA cap 0-1 NS5-type MT domain. S-adenosyl-L-methionine is bound at residue Ser-2567. Residue Ser-2567 is modified to Phosphoserine. The active-site For 2'-O-MTase activity is the Lys-2572. S-adenosyl-L-methionine-binding residues include Gly-2597, Trp-2598, Thr-2615, Ile-2616, Asp-2642, and Val-2643. The active-site For 2'-O-MTase activity is the Asp-2657. S-adenosyl-L-methionine is bound at residue Ile-2658. Residues Lys-2694 and Glu-2730 each act as for 2'-O-MTase activity in the active site. Positions 2730–2734 (EMYFS) are interaction with host SCRIB. Position 2732 (Tyr-2732) interacts with S-adenosyl-L-methionine. Zn(2+) is bound by residues Glu-2950, His-2954, Cys-2959, and Cys-2962. One can recognise a RdRp catalytic domain in the interval 3040 to 3189 (GLFYADDTAG…RPVDDRFSKA (150 aa)). Zn(2+)-binding residues include His-3224, Cys-3240, and Cys-3359.

It in the N-terminal section; belongs to the class I-like SAM-binding methyltransferase superfamily. mRNA cap 0-1 NS5-type methyltransferase family. Homodimer. Interacts (via N-terminus) with host EXOC1 (via C-terminus); this interaction results in EXOC1 degradation through the proteasome degradation pathway. In terms of assembly, forms heterodimers with envelope protein E in the endoplasmic reticulum and Golgi. As to quaternary structure, homodimer; in the endoplasmic reticulum and Golgi. Interacts with protein prM. Interacts with non-structural protein 1. Homodimer; Homohexamer when secreted. Interacts with envelope protein E. In terms of assembly, interacts (via N-terminus) with serine protease NS3. As to quaternary structure, forms a heterodimer with serine protease NS3. May form homooligomers. Forms a heterodimer with NS2B. Interacts with non-structural protein 2A (via N-terminus). Interacts with NS4B. Interacts with unphosphorylated RNA-directed RNA polymerase NS5; this interaction stimulates RNA-directed RNA polymerase NS5 guanylyltransferase activity. In terms of assembly, interacts with serine protease NS3. Interacts with NS1. As to quaternary structure, homodimer. Interacts with host STAT2; this interaction inhibits the phosphorylation of the latter, and, when all viral proteins are present (polyprotein), targets STAT2 for degradation. Interacts with serine protease NS3. Interacts with host SCRIB; this interaction targets NS5 to the cell membrane periphery and nucleus, thereby allowing efficient host nuclear STAT1 inhibition. In terms of processing, specific enzymatic cleavages in vivo yield mature proteins. Cleavages in the lumen of endoplasmic reticulum are performed by host signal peptidase, whereas cleavages in the cytoplasmic side are performed by serine protease NS3. Signal cleavage at the 2K-4B site requires a prior NS3 protease-mediated cleavage at the 4A-2K site. Post-translationally, cleaved in post-Golgi vesicles by a host furin, releasing the mature small envelope protein M, and peptide pr. This cleavage is incomplete as up to 30% of viral particles still carry uncleaved prM. N-glycosylated. In terms of processing, N-glycosylated. The excreted form is glycosylated and this is required for efficient secretion of the protein from infected cells. Post-translationally, acetylated by host KAT5. Acetylation modulates NS3 RNA-binding and unwinding activities and plays an important positive role for viral replication. Phosphorylated on serines residues. This phosphorylation may trigger NS5 nuclear localization.

It is found in the virion. The protein localises to the host nucleus. The protein resides in the host cytoplasm. Its subcellular location is the host perinuclear region. It localises to the secreted. It is found in the virion membrane. The protein localises to the host endoplasmic reticulum membrane. The catalysed reaction is Selective hydrolysis of -Xaa-Xaa-|-Yaa- bonds in which each of the Xaa can be either Arg or Lys and Yaa can be either Ser or Ala.. It carries out the reaction RNA(n) + a ribonucleoside 5'-triphosphate = RNA(n+1) + diphosphate. It catalyses the reaction a ribonucleoside 5'-triphosphate + H2O = a ribonucleoside 5'-diphosphate + phosphate + H(+). The enzyme catalyses ATP + H2O = ADP + phosphate + H(+). The catalysed reaction is a 5'-end (5'-triphosphoguanosine)-ribonucleoside in mRNA + S-adenosyl-L-methionine = a 5'-end (N(7)-methyl 5'-triphosphoguanosine)-ribonucleoside in mRNA + S-adenosyl-L-homocysteine. It carries out the reaction a 5'-end (N(7)-methyl 5'-triphosphoguanosine)-ribonucleoside in mRNA + S-adenosyl-L-methionine = a 5'-end (N(7)-methyl 5'-triphosphoguanosine)-(2'-O-methyl-ribonucleoside) in mRNA + S-adenosyl-L-homocysteine + H(+). Functionally, plays a role in virus budding by binding to membrane and gathering the viral RNA into a nucleocapsid that forms the core of a mature virus particle. During virus entry, may induce genome penetration in host cytoplasm after hemifusion induced by surface proteins. Can migrate to the cell nucleus where it modulates host functions. In terms of biological role, inhibits RNA silencing by interfering with host Dicer. Its function is as follows. Prevents premature fusion activity of envelope proteins in trans-Golgi by binding to envelope protein E at pH6.0. After virion release in extracellular space gets dissociated from E dimers. Acts as a chaperone for envelope protein E during intracellular virion assembly by masking and inactivating envelope protein E fusion peptide. prM is the only viral peptide matured by host furin in the trans-Golgi network. Presumably to avoid catastrophic activation of the viral fusion activity in acidic GolGi compartment prior to virion release. prM-E cleavage is ineficient, and many virions are only partially matured. These uncleaved prM would play a role in immune evasion. Functionally, may play a role in virus budding. Exerts cytotoxic effects by activating a mitochondrial apoptotic pathway through M extodomain. May display a viroporin activity. In terms of biological role, binds to host cell surface receptor and mediates fusion between viral and cellular membranes. Envelope protein is synthesized in the endoplasmic reticulum in the form of heterodimer with protein prM. They play a role in virion budding in the ER, and the newly formed immature particle is covered with 60 spikes composed of heterodimer between precursor prM and envelope protein E. The virion is transported to the Golgi apparatus where the low pH causes dissociation of PrM-E heterodimers and formation of E homodimers. prM-E cleavage is ineficient, and many virions are only partially matured. These uncleaved prM would play a role in immune evasion. Its function is as follows. Involved in immune evasion, pathogenesis and viral replication. Once cleaved off the polyprotein, is targeted to three destinations: the viral replication cycle, the plasma membrane and the extracellular compartment. Essential for viral replication. Required for formation of the replication complex and recruitment of other non-structural proteins to the ER-derived membrane structures. Excreted as a hexameric lipoparticle that plays a role against host immune response. Antagonizing the complement function. Binds to the host macrophages and dendritic cells. Inhibits signal transduction originating from Toll-like receptor 3 (TLR3). Component of the viral RNA replication complex that functions in virion assembly and antagonizes the host immune response. Functionally, required cofactor for the serine protease function of NS3. May have membrane-destabilizing activity and form viroporins. In terms of biological role, displays three enzymatic activities: serine protease, NTPase and RNA helicase. NS3 serine protease, in association with NS2B, performs its autocleavage and cleaves the polyprotein at dibasic sites in the cytoplasm: C-prM, NS2A-NS2B, NS2B-NS3, NS3-NS4A, NS4A-2K and NS4B-NS5. NS3 RNA helicase binds RNA and unwinds dsRNA in the 3' to 5' direction. Its function is as follows. Regulates the ATPase activity of the NS3 helicase activity. NS4A allows NS3 helicase to conserve energy during unwinding. Functions as a signal peptide for NS4B and is required for the interferon antagonism activity of the latter. Functionally, induces the formation of ER-derived membrane vesicles where the viral replication takes place. Inhibits interferon (IFN)-induced host STAT1 phosphorylation and nuclear translocation, thereby preventing the establishment of cellular antiviral state by blocking the IFN-alpha/beta pathway. Inhibits STAT2 translocation in the nucleus after IFN-alpha treatment. In terms of biological role, replicates the viral (+) and (-) genome, and performs the capping of genomes in the cytoplasm. NS5 methylates viral RNA cap at guanine N-7 and ribose 2'-O positions. Besides its role in genome replication, also prevents the establishment of cellular antiviral state by blocking the interferon-alpha/beta (IFN-alpha/beta) signaling pathway. Inhibits host TYK2 and STAT2 phosphorylation, thereby preventing activation of JAK-STAT signaling pathway. In Homo sapiens (Human), this protein is Genome polyprotein.